We begin with the raw amino-acid sequence, 128 residues long: Prefoldin subunit 1 (128 aa).

Coiled coils occupy residues 17-37 (MIEL…KEGD) and 81-115 (LKDS…LLQQ).

It belongs to the prefoldin subunit beta family. As to quaternary structure, heterohexamer of two PFD-alpha type and four PFD-beta type subunits forming prefoldin co-chaperone complex. Interacts with LSM8, a specific subunit of the LSM2-8 complex, which is a core component of the spliceosome.

It is found in the cytoplasm. Its subcellular location is the nucleus. In terms of biological role, binds specifically to cytosolic chaperonin (c-CPN) and transfers target proteins to it. Binds to nascent polypeptide chain and promotes folding in an environment in which there are many competing pathways for nonnative proteins. Together with other chaperonins, contribute to the regulation of gene expression by modulating the spliceosome function on pre-mRNA splicing post-transcriptionally by acting as a co-chaperone of Hsp90 to control levels of LSM8. Required for microtubules (MTs) organization and dynamicity. Involved in the process leading to microtubules dissociation in response to gibberellic acid (GA) probably due to the DELLA proteins-mediated translocation of the prefoldin co-chaperone complex from the cytoplasm to the nucleus. The sequence is that of Prefoldin subunit 1 from Arabidopsis thaliana (Mouse-ear cress).